A 291-amino-acid chain; its full sequence is ATP synthase gamma chain (291 aa).

It belongs to the ATPase gamma chain family. As to quaternary structure, F-type ATPases have 2 components, CF(1) - the catalytic core - and CF(0) - the membrane proton channel. CF(1) has five subunits: alpha(3), beta(3), gamma(1), delta(1), epsilon(1). CF(0) has three main subunits: a, b and c.

It is found in the cell inner membrane. Produces ATP from ADP in the presence of a proton gradient across the membrane. The gamma chain is believed to be important in regulating ATPase activity and the flow of protons through the CF(0) complex. The chain is ATP synthase gamma chain from Persephonella marina (strain DSM 14350 / EX-H1).